We begin with the raw amino-acid sequence, 177 residues long: ATP synthase subunit b (177 aa).

The helical transmembrane segment at 16-36 threads the bilayer; the sequence is HLLLANMIVTIVVFLLLLILL.

It belongs to the ATPase B chain family. As to quaternary structure, F-type ATPases have 2 components, F(1) - the catalytic core - and F(0) - the membrane proton channel. F(1) has five subunits: alpha(3), beta(3), gamma(1), delta(1), epsilon(1). F(0) has three main subunits: a(1), b(2) and c(10-14). The alpha and beta chains form an alternating ring which encloses part of the gamma chain. F(1) is attached to F(0) by a central stalk formed by the gamma and epsilon chains, while a peripheral stalk is formed by the delta and b chains.

It localises to the cell membrane. Functionally, f(1)F(0) ATP synthase produces ATP from ADP in the presence of a proton or sodium gradient. F-type ATPases consist of two structural domains, F(1) containing the extramembraneous catalytic core and F(0) containing the membrane proton channel, linked together by a central stalk and a peripheral stalk. During catalysis, ATP synthesis in the catalytic domain of F(1) is coupled via a rotary mechanism of the central stalk subunits to proton translocation. Its function is as follows. Component of the F(0) channel, it forms part of the peripheral stalk, linking F(1) to F(0). This Exiguobacterium sibiricum (strain DSM 17290 / CCUG 55495 / CIP 109462 / JCM 13490 / 255-15) protein is ATP synthase subunit b.